The primary structure comprises 426 residues: Glutamate-1-semialdehyde 2,1-aminomutase (426 aa).

K265 is modified (N6-(pyridoxal phosphate)lysine).

The protein belongs to the class-III pyridoxal-phosphate-dependent aminotransferase family. HemL subfamily. In terms of assembly, homodimer. It depends on pyridoxal 5'-phosphate as a cofactor.

It localises to the cytoplasm. The enzyme catalyses (S)-4-amino-5-oxopentanoate = 5-aminolevulinate. It participates in porphyrin-containing compound metabolism; protoporphyrin-IX biosynthesis; 5-aminolevulinate from L-glutamyl-tRNA(Glu): step 2/2. This Salmonella typhi protein is Glutamate-1-semialdehyde 2,1-aminomutase.